Here is a 375-residue protein sequence, read N- to C-terminus: MLKNWGKKLLLSIVGATLTCLLVLVVDQQSRHMLETQSDHEPGSAAAVHLRADLDPANPGDGGDPANSAQDSGTFSAYFNKLTRVRRDVEQVAAPSKDSAAPEEDITANDVFIAVKTTKKFHRSRMDLLMDTWISRNKEQTFIFTDGEDEELQKKTGNVISTNCSAAHSRQALSCKMAVEYDKFIESDKKWFCHVDDDNYVNVRTLVKLLSRYSHTNDIYIGKPSLDRPIQATERISESNMRPVNFWFATGGAGFCISRGLALKMSPWASGGHFMNTAEKIRLPDDCTIGYIIESVLGVKLIRSNLFHSHLENLHQVPQSEIHNQVTLSYGMFENKRNAILMKGAFSVEEDPSRFRSVHCLLYPDTPWCPWKAAY.

Over 1-8 the chain is Cytoplasmic; it reads MLKNWGKK. A helical; Signal-anchor for type II membrane protein transmembrane segment spans residues 9–29; that stretch reads LLLSIVGATLTCLLVLVVDQQ. The Lumenal portion of the chain corresponds to 30-375; that stretch reads SRHMLETQSD…TPWCPWKAAY (346 aa). Residues 53–73 are disordered; sequence DLDPANPGDGGDPANSAQDSG. Residue R125 coordinates substrate. N163 carries an N-linked (GlcNAc...) asparagine glycan. Cystine bridges form between C164-C175 and C193-C256. A substrate-binding site is contributed by D197. D198 contributes to the Mn(2+) binding site. The active site involves D286. H310 contributes to the Mn(2+) binding site. C360 and C369 are joined by a disulfide.

Belongs to the glycosyltransferase 31 family. The cofactor is Mn(2+). It depends on Co(2+) as a cofactor. Post-translationally, a soluble form may be derived from the membrane form by proteolytic processing. In terms of tissue distribution, detected in the neural tube, the eye and the otic vesicle, expression coincides with the region that produces the medial, intermediate and lateral neurons.

It localises to the golgi apparatus membrane. The enzyme catalyses 3-O-(alpha-L-fucosyl)-L-threonyl-[EGF-like domain protein] + UDP-N-acetyl-alpha-D-glucosamine = 3-O-(N-acetyl-beta-D-glucosaminyl-(1-&gt;3)-alpha-L-fucosyl)-L-threonyl-[EGF-like domain protein] + UDP + H(+). It carries out the reaction 3-O-(alpha-L-fucosyl)-L-seryl-[EGF-like domain protein] + UDP-N-acetyl-alpha-D-glucosamine = 3-O-(N-acetyl-beta-D-glucosaminyl-(1-&gt;3)-alpha-L-fucosyl)-L-seryl-[EGF-like domain protein] + UDP + H(+). Functionally, glycosyltransferase that initiates the elongation of O-linked fucose residues attached to EGF-like repeats in the extracellular domain of Notch molecules. Essential mediator of somite segmentation and patterning. May be involved in mesoderm development. This chain is Beta-1,3-N-acetylglucosaminyltransferase lunatic fringe (lfng), found in Xenopus laevis (African clawed frog).